We begin with the raw amino-acid sequence, 82 residues long: Delta-ctenitoxin-Pn1a (82 aa).

The first 16 residues, 1-16, serve as a signal peptide directing secretion; the sequence is MKVAIVFLSLLVLAFA. A propeptide spanning residues 17-34 is cleaved from the precursor; sequence SESIEENREEFPVEESAR. 5 cysteine pairs are disulfide-bonded: cysteine 35-cysteine 49, cysteine 42-cysteine 55, cysteine 46-cysteine 82, cysteine 48-cysteine 65, and cysteine 57-cysteine 63.

It belongs to the neurotoxin 03 (Tx2) family. 05 subfamily. As to expression, expressed by the venom gland.

Its subcellular location is the secreted. This neurotoxin binds at site 3 of insect voltage-activated sodium channels (Nav) and prolongs evoked axonal action potentials by a slowing down of sodium current inactivation. The toxin also inhibits glutamate uptake from rat brain synaptosomes. It reversibly inhibits the N-methyl-D-aspartate (NMDA)-subtype of ionotropic glutamate receptor (GRIN). In addition, the toxin shows antinociceptive effect in all rat pain models tested (inflammatory, neuropathic and nociceptive). The antinociceptive effect is partially blocked when selective antagonists of both mu- and delta-opioid receptors are administered, revealing that the antinociceptive effect of the toxin involves both opioid and cannabinoid endogenous systems. In vivo, it is highly toxic to house fly (Musca domestica), toxic to cockroach, but has no effect when intracerebroventricularly injected into mice. The polypeptide is Delta-ctenitoxin-Pn1a (Phoneutria nigriventer (Brazilian armed spider)).